Here is a 95-residue protein sequence, read N- to C-terminus: Putative regulatory protein Pmob_0099 (95 aa).

Belongs to the RemA family.

The sequence is that of Putative regulatory protein Pmob_0099 from Petrotoga mobilis (strain DSM 10674 / SJ95).